The chain runs to 222 residues: Cytidylate kinase (222 aa).

Residue 9–17 (GPAGSGKTT) coordinates ATP.

The protein belongs to the cytidylate kinase family. Type 1 subfamily.

The protein localises to the cytoplasm. The catalysed reaction is CMP + ATP = CDP + ADP. It catalyses the reaction dCMP + ATP = dCDP + ADP. The chain is Cytidylate kinase from Thermosipho africanus (strain TCF52B).